A 130-amino-acid polypeptide reads, in one-letter code: Guanylate kinase (130 aa).

In terms of domain architecture, Guanylate kinase-like spans 1–130 (KIFEDPTTSY…EKIQSRVNEA (130 aa)).

This sequence belongs to the guanylate kinase family.

The protein resides in the cytoplasm. It catalyses the reaction GMP + ATP = GDP + ADP. Functionally, essential for recycling GMP and indirectly, cGMP. This is Guanylate kinase (gmk) from Staphylococcus epidermidis.